Consider the following 880-residue polypeptide: MTLLTSSLLLFSLLTSRLEAIPVLEKSPAHPAHSAHTAHPAHPSPGVRILRAPESLVAPLGDEVVLECETSLQPERFEWSHRSSRSPGAGFKYLRTGTAKANVSQEAAISRLRVLVRPDTLGEYRCVGWFGPLVVTSTTARLELASTSLVDAQEPESPLQWRVSAGNSVLWSCGQQVQSNPSASWSYFRNGVEIKPEFIGTNGNLFLSNVSSESSGSYSCQATNPASGERIQLPGSLQLQVTPEQRSQSKSPHLLKGQPSSQEITIREGSSLLLLCPGVGSPPPTVVWSSPDVVGAVKNKRSKVFGHALEISNTRVHDAGTYICFQDNGVRPALEHYIKVHVEQPPQIVRPPWADLTNEGDRLKLECEATGVPTPEIYWLLNGHSSIDDTEAELSNNFLILHSVLKRHAGYVQCFARNRLGEHSAGTLLQVNPKQIQEPRESGGTHRPNPNQGSKHKQMYPPTPPNVTRLTDESVMLRWMVPRNDGLPIVIFKVQYRMVGKRKNWQTTNDNIPYGKPKWNSELGKSFTASVTDLKPEHTYRFRILAVYSNNDNKESNTSAKFYLQPGAALDPMPVPELLEIEEYSETAVVLHWSLASDADEHLITGYYAYYRPSSSAGEYFKATIEGAHARSFKIAPLETATMYEFKLQSFSAVSASEFSALKQGRTQRPKTSTTEEPTLQMGDRDTTTPSHNETFNMSPMLTGTIGGGAVLILLLISTCLCVCRRRNSRSRGNNPNKPRMAELRDDFVPLGNCSPTKQRQRTRHIHITLNPLAQQQQQALEEKNDTDQDAPYYQRPSSYDYDPALRRMSSSSLRRSQRTLERAGGSNGSNNGNNNNLNQTAEAGAVENPGKPGRVLMKRPRLSSRSENLSSGSLNSVGV.

An N-terminal signal peptide occupies residues 1–20 (MTLLTSSLLLFSLLTSRLEA). Residues 21-703 (IPVLEKSPAH…ETFNMSPMLT (683 aa)) lie on the Extracellular side of the membrane. 4 consecutive Ig-like C2-type domains span residues 45-142 (PGVR…TARL), 155-232 (PESP…ERIQ), 252-340 (PHLL…YIKV), and 346-432 (PQIV…LQVN). Disulfide bonds link C68–C126, C173–C220, C276–C324, and C367–C414. N-linked (GlcNAc...) asparagine glycosylation is found at N102 and N209. The disordered stretch occupies residues 429-467 (LQVNPKQIQEPRESGGTHRPNPNQGSKHKQMYPPTPPNV). Fibronectin type-III domains are found at residues 461–567 (PPTP…LQPG) and 575–670 (VPEL…TQRP). An N-linked (GlcNAc...) asparagine glycan is attached at N466. Heparin is bound by residues R497, K501, K503, and R541. N557 is a glycosylation site (N-linked (GlcNAc...) asparagine). Positions 662 to 692 (LKQGRTQRPKTSTTEEPTLQMGDRDTTTPSH) are disordered. Positions 665–678 (GRTQRPKTSTTEEP) are enriched in polar residues. Residue N693 is glycosylated (N-linked (GlcNAc...) asparagine). Residues 704–724 (GTIGGGAVLILLLISTCLCVC) form a helical membrane-spanning segment. Topologically, residues 725–880 (RRRNSRSRGN…SSGSLNSVGV (156 aa)) are cytoplasmic. Disordered regions lie at residues 728–762 (NSRSRGNNPNKPRMAELRDDFVPLGNCSPTKQRQR) and 775–880 (QQQQ…SVGV). Low complexity-rich tracts occupy residues 823-837 (RAGGSNGSNNGNNNN) and 864-880 (SSRSENLSSGSLNSVGV).

Belongs to the immunoglobulin superfamily. IHOG family. As to quaternary structure, homodimer. Heterotetramer; 2 iHog chains bind 2 hh chains when facilitated by heparin, heparin is required to promote high-affinity interactions between hh and iHog.

Its subcellular location is the membrane. In terms of biological role, mediates response to the active Hedgehog (Hh) protein signal in embryos, functioning upstream or at the level of patched (ptc). The protein is Interference hedgehog of Drosophila simulans (Fruit fly).